The sequence spans 594 residues: Laccase-2 (594 aa).

The signal sequence occupies residues methionine 1–serine 20. Asparagine 67 carries N-linked (GlcNAc...) asparagine glycosylation. 2 Plastocyanin-like domains span residues glutamate 70 to asparagine 183 and aspartate 195 to glycine 357. Residues histidine 117 and histidine 119 each contribute to the Cu cation site. The N-linked (GlcNAc...) asparagine glycan is linked to asparagine 124. An intrachain disulfide couples cysteine 138 to cysteine 578. The Cu cation site is built by histidine 162 and histidine 164. Residues asparagine 242, asparagine 286, asparagine 320, asparagine 358, asparagine 397, asparagine 430, asparagine 452, and asparagine 458 are each glycosylated (N-linked (GlcNAc...) asparagine). In terms of domain architecture, Plastocyanin-like 3 spans proline 466–glutamate 563. 3 residues coordinate Cu cation: histidine 480, histidine 483, and histidine 485. Asparagine 508 is a glycosylation site (N-linked (GlcNAc...) asparagine). Cu cation contacts are provided by histidine 543, cysteine 544, histidine 545, and histidine 549.

This sequence belongs to the multicopper oxidase family. The cofactor is Cu cation.

The protein resides in the secreted. It localises to the cell wall. It carries out the reaction 4 hydroquinone + O2 = 4 benzosemiquinone + 2 H2O. Its function is as follows. Laccase that catalyzes the oxidation of certain aromatic compounds, including L-dopa, to quinones, which then polymerize to melanin. Able to oxidize a wide variety of aromatic diphenol and diamino groups in the ortho, meta, and para positions but not monophenolic groups such as in phenol, tyramine, or tyrosine. Plays an important role in virulence. Plays a role in dissemination to extrapulmonary sites but is not involved in pulmonary growth or in elicitation of cellular immune responses in the lung. The chain is Laccase-2 (LAC2) from Cryptococcus neoformans var. grubii serotype A (strain H99 / ATCC 208821 / CBS 10515 / FGSC 9487) (Filobasidiella neoformans var. grubii).